Reading from the N-terminus, the 808-residue chain is Digalactosyldiacylglycerol synthase 1, chloroplastic (808 aa).

The segment at 1-23 is disordered; that stretch reads MVKETLIPPSSTSMTTGTSSSSS. The N-terminal 58 residues, 1-58, are a transit peptide targeting the chloroplast; that stretch reads MVKETLIPPSSTSMTTGTSSSSSLSMTLSSTNALSFLSKGWREVWDSADADLQLMRDR. Low complexity predominate over residues 10–23; the sequence is SSTSMTTGTSSSSS.

This sequence belongs to the glycosyltransferase group 1 family. Glycosyltransferase 4 subfamily.

It localises to the plastid. The protein resides in the chloroplast outer membrane. The catalysed reaction is a 1,2-diacyl-3-O-(beta-D-galactosyl)-sn-glycerol + UDP-alpha-D-galactose = a 1,2-diacyl-3-O-[alpha-D-galactosyl-(1-&gt;6)-beta-D-galactosyl]-sn-glycerol + UDP + H(+). Functionally, involved in the synthesis of diacylglycerol galactolipids that are specifically found in thylakoid membranes. Specific for alpha-glycosidic linkages. Responsible for the final assembly of galactolipids in photosynthetic membranes. Digalactosyldiacylglycerol (DGDG) provides stability to the photosystem I (PSI) complex, especially to the PsaA, PsaB, PsaC, PsaL and PsaH subunits. The polypeptide is Digalactosyldiacylglycerol synthase 1, chloroplastic (Arabidopsis thaliana (Mouse-ear cress)).